A 277-amino-acid chain; its full sequence is Diaminopimelate epimerase (277 aa).

Substrate-binding residues include asparagine 15 and asparagine 74. Cysteine 83 serves as the catalytic Proton donor. Substrate is bound by residues 84–85, asparagine 159, asparagine 194, and 212–213; these read GN and ER. Cysteine 221 functions as the Proton acceptor in the catalytic mechanism. Position 222–223 (222–223) interacts with substrate; sequence GT.

It belongs to the diaminopimelate epimerase family. In terms of assembly, homodimer.

The protein resides in the cytoplasm. It catalyses the reaction (2S,6S)-2,6-diaminopimelate = meso-2,6-diaminopimelate. Its pathway is amino-acid biosynthesis; L-lysine biosynthesis via DAP pathway; DL-2,6-diaminopimelate from LL-2,6-diaminopimelate: step 1/1. Its function is as follows. Catalyzes the stereoinversion of LL-2,6-diaminopimelate (L,L-DAP) to meso-diaminopimelate (meso-DAP), a precursor of L-lysine and an essential component of the bacterial peptidoglycan. This chain is Diaminopimelate epimerase, found in Corynebacterium glutamicum (strain R).